Reading from the N-terminus, the 191-residue chain is Potassium-transporting ATPase KdpC subunit (191 aa).

The chain crosses the membrane as a helical span at residues 11–31 (LFVLLTAVTGVVYPLAVTGIA).

It belongs to the KdpC family. The system is composed of three essential subunits: KdpA, KdpB and KdpC.

It localises to the cell inner membrane. Functionally, part of the high-affinity ATP-driven potassium transport (or Kdp) system, which catalyzes the hydrolysis of ATP coupled with the electrogenic transport of potassium into the cytoplasm. This subunit acts as a catalytic chaperone that increases the ATP-binding affinity of the ATP-hydrolyzing subunit KdpB by the formation of a transient KdpB/KdpC/ATP ternary complex. The chain is Potassium-transporting ATPase KdpC subunit from Dechloromonas aromatica (strain RCB).